We begin with the raw amino-acid sequence, 389 residues long: MKKLLKSALLSAAFAGSVGSLQALPVGNPSDPSLLIDGTIWEGAAGDPCDPCATWCDAISLRAGFYGDYVFDRILKIDAPKTFSMGAKPTGSATANYTTAVDRPNPAYNKHLYDAEWFTNAGFIALNIWDRFDVFCTLGASNGYVKGNSAAFNLVGLFGVKGTSVNANELPNVSLSNGVIELYTDTTFAWSVGARGALWECGCATLGAEFQYAQSKPKVEELNVICNVSQFSLNKPKGYKGVAFPLPTDAGVVTAAGTKSATINYHEWQVGASLSYRLNSLVPYIGVQWSRATFDADNIRIAQPKLPTAILNLTAWNPSLLGSATAVSSSDQFSDFMQIVSCQINKFKSRKACGVTVGATLVDADKWSLTAEARLINERAAHISGQFRF.

An N-terminal signal peptide occupies residues 1 to 23 (MKKLLKSALLSAAFAGSVGSLQA).

It belongs to the chlamydial porin (CP) (TC 1.B.2) family. In terms of assembly, part of a disulfide cross-linked outer membrane complex (COMC) composed of the major outer membrane porin (MOMP), the small cysteine-rich protein (OmcA) and the large cysteine-rich periplasmic protein (OmcB).

It is found in the cell outer membrane. Its function is as follows. In elementary bodies (EBs, the infectious stage, which is able to survive outside the host cell) provides the structural integrity of the outer envelope through disulfide cross-links with the small cysteine-rich protein and the large cysteine-rich periplasmic protein. It has been described in publications as the Sarkosyl-insoluble COMC (Chlamydia outer membrane complex), and serves as the functional equivalent of peptidoglycan. In terms of biological role, permits diffusion of specific solutes through the outer membrane. In Chlamydia pneumoniae (Chlamydophila pneumoniae), this protein is Major outer membrane porin (ompA).